We begin with the raw amino-acid sequence, 387 residues long: Odorant receptor 19a (387 aa).

The Cytoplasmic portion of the chain corresponds to 1–40 (MDISKVDSTRALVNHWRIFRIMGIHPPGKRTFWGRHYTAY). Residues 41–61 (SMVWNVTFHICIWVSFSVNLL) form a helical membrane-spanning segment. The Extracellular segment spans residues 62–71 (QSNSLETFCE). A helical membrane pass occupies residues 72 to 92 (SLCVTMPHTLYMLKLINVRRM). Residues 93 to 127 (RGQMISSHWLLRLLDKRLGCDDERQIIMAGIERAE) lie on the Cytoplasmic side of the membrane. A helical transmembrane segment spans residues 128 to 148 (FIFRTIFRGLACTVVLGIIYI). Over 149–171 (SASSEPTLMYPTWIPWNWRDSTS) the chain is Extracellular. A helical membrane pass occupies residues 172 to 192 (AYLATAMLHTTALMANATLVL). Topologically, residues 193–254 (NLSSYPGTYL…LRLFKSLERS (62 aa)) are cytoplasmic. A helical transmembrane segment spans residues 255–275 (LSMTCFLQFFSTACAQCTICY). Over 276 to 285 (FLLFGNVGIM) the chain is Extracellular. Residues 286-306 (RFMNMLFLLVILTTETLLLCY) traverse the membrane as a helical segment. Residues 307-336 (TAELPCKEGESLLTAVYSCNWLSQSVNFRR) lie on the Cytoplasmic side of the membrane. Residues 337-357 (LLLLMLARCQIPMILVSGVIV) traverse the membrane as a helical segment. The Extracellular portion of the chain corresponds to 358–387 (PISMKTFTVMIKGAYTMLTLLNEIRKTSLE).

The protein belongs to the insect chemoreceptor superfamily. Heteromeric odorant receptor channel (TC 1.A.69) family. Or2a subfamily. Interacts with Orco. Complexes exist early in the endomembrane system in olfactory sensory neurons (OSNs), coupling these complexes to the conserved ciliary trafficking pathway. Expressed in ai2A olfactory sensory neurons in the antenna.

Its subcellular location is the cell membrane. Functionally, odorant receptor which mediates acceptance or avoidance behavior, depending on its substrates. The odorant receptor repertoire encodes a large collection of odor stimuli that vary widely in identity, intensity, and duration. May form a complex with Orco to form odorant-sensing units, providing sensitive and prolonged odorant signaling and calcium permeability. Involved in the preference for citrus fruits for oviposition, especially through the response to valencene, the primary ligand of Or19a. Larvae growing on citrus fruits suffer a reduced risk of parasitism since endoparasitoid wasps that parasitize larvae are strongly repelled by the smell of citrus, as well as by valencene. In Drosophila melanogaster (Fruit fly), this protein is Odorant receptor 19a (Or19a).